Consider the following 241-residue polypeptide: MPKYEIMTILDPKAEMAIIDNLLKTVFGDNSTEKLRKLETTNLAYPIRKSKIAQYFLVDLNAPTNLIEEFVRRANITREIWRYLIVNLDSEKGLNKKPKIRERNRKYTPRRDRFEKPNFRGNPKSRFDQQDQQATKNQQNFQQNQQNQTSQYRENSRQNQDDFQQVSSNQQNFGQNQQNQSGYHRENNRQNQENIHQNSKNHQNQTSQTQRNRRQYQPIKNPKFNQKEKENYNNKKPQSSN.

Over residues 97–108 (KPKIRERNRKYT) the composition is skewed to basic residues. The disordered stretch occupies residues 97 to 241 (KPKIRERNRK…YNNKKPQSSN (145 aa)). The span at 109–118 (PRRDRFEKPN) shows a compositional bias: basic and acidic residues. 2 stretches are compositionally biased toward low complexity: residues 130–151 (QDQQ…QTSQ) and 161–182 (DDFQ…NQSG). The span at 189–202 (RQNQENIHQNSKNH) shows a compositional bias: polar residues.

It belongs to the bacterial ribosomal protein bS6 family.

Binds together with bS18 to 16S ribosomal RNA. This Mesomycoplasma hyopneumoniae (strain 232) (Mycoplasma hyopneumoniae) protein is Small ribosomal subunit protein bS6.